Here is an 832-residue protein sequence, read N- to C-terminus: Vacuolar transmembrane transporter penV (832 aa).

The next 2 helical transmembrane spans lie at 39-59 and 117-137; these read LYTQ…AFCI and FFKF…AIIL. Positions 152-171 are disordered; that stretch reads WDNPPGNKTTSPIDGSEKEK. Asn158 is a glycosylation site (N-linked (GlcNAc...) asparagine). The chain crosses the membrane as a helical span at residues 178 to 198; sequence YLWIYVLFAYVFSGLAIYMLL. Asn214 carries an N-linked (GlcNAc...) asparagine glycan. The segment at 291 to 322 is disordered; that stretch reads NDGNALPLTEQQPRDADDERSGLLSGHDNEHV. A compositionally biased stretch (basic and acidic residues) spans 302-321; it reads QPRDADDERSGLLSGHDNEH. Transmembrane regions (helical) follow at residues 434 to 454, 483 to 503, 524 to 544, 560 to 582, 587 to 608, 623 to 645, 650 to 672, 687 to 707, and 713 to 733; these read FVIG…ASLL, GLPT…YEWL, FFFS…ASGF, TIAL…LLIL, LFPF…FLSA, FSYG…YSVF, LICL…QLLY, MICN…IGVL, and ITRS…SYWF. Residues 754-777 are disordered; that stretch reads PGGGDISPSPSSTLSPPSGLDRDS. Residues 759–771 show a composition bias toward low complexity; that stretch reads ISPSPSSTLSPPS.

The protein belongs to the CSC1 (TC 1.A.17) family.

The protein resides in the vacuole membrane. Vacuolar transmembrane transporter that participates in the first stage of the beta-lactam biosynthesis (the formation of the ACV tripeptide), probably taking part in the supply of amino acids from the vacuolar lumen to the vacuole-anchored ACV synthetase. This chain is Vacuolar transmembrane transporter penV, found in Penicillium rubens (strain ATCC 28089 / DSM 1075 / NRRL 1951 / Wisconsin 54-1255) (Penicillium chrysogenum).